The following is a 540-amino-acid chain: Cytosolic carboxypeptidase 6 (540 aa).

Residues 167-438 form the Peptidase M14 domain; it reads YPYTYTRFQH…NVARTFLDYY (272 aa). Zn(2+) is bound by residues H230, E233, and H328. E401 (proton donor/acceptor) is an active-site residue.

The protein belongs to the peptidase M14 family. Interacts with MYLK. Requires Zn(2+) as cofactor. Widely expressed. Expressed abundantly in testis, pituitary and brain and to a lower extent in eye, stomach, adrenal and kidney. In brain, expressed at low level in cerebellum as compared to cortex.

It localises to the cytoplasm. The protein resides in the cytosol. It is found in the cytoskeleton. Its subcellular location is the microtubule organizing center. The protein localises to the centrosome. It localises to the centriole. The protein resides in the golgi apparatus. It is found in the cilium basal body. It carries out the reaction (L-glutamyl)(n+1)-gamma-L-glutamyl-L-glutamyl-[protein] + H2O = (L-glutamyl)(n)-gamma-L-glutamyl-L-glutamyl-[protein] + L-glutamate. The enzyme catalyses C-terminal L-alpha-aminoacyl-L-glutamyl-L-glutamyl-[tubulin] + H2O = C-terminal L-alpha-aminoacyl-L-glutamyl-[tubulin] + L-glutamate. In terms of biological role, metallocarboxypeptidase that mediates protein deglutamylation of tubulin and non-tubulin target proteins. Catalyzes the removal of polyglutamate side chains present on the gamma-carboxyl group of glutamate residues within the C-terminal tail of tubulin protein. Specifically cleaves tubulin long-side-chains, while it is not able to remove the branching point glutamate. Also catalyzes the removal of polyglutamate residues from the carboxy-terminus of non-tubulin proteins such as MYLK. Mediates the deglutamylation of nucleotidyltransferase CGAS, leading to CGAS antiviral defense response activation. Involved in KLF4 deglutamylation which promotes KLF4 proteasome-mediated degradation, thereby negatively regulating cell pluripotency maintenance and embryogenesis. The protein is Cytosolic carboxypeptidase 6 of Mus musculus (Mouse).